The sequence spans 192 residues: Ion-translocating oxidoreductase complex subunit A (192 aa).

Helical transmembrane passes span 5–25, 39–59, 67–87, 102–122, 134–154, and 171–191; these read VLLL…FLGL, IGMG…AYLV, LGIE…VVQF, LLGI…VALL, IIYG…FASM, and SIAM…TGLV.

The protein belongs to the NqrDE/RnfAE family. As to quaternary structure, the complex is composed of six subunits: RnfA, RnfB, RnfC, RnfD, RnfE and RnfG.

The protein localises to the cell inner membrane. Its function is as follows. Part of a membrane-bound complex that couples electron transfer with translocation of ions across the membrane. This is Ion-translocating oxidoreductase complex subunit A from Vibrio parahaemolyticus serotype O3:K6 (strain RIMD 2210633).